The following is a 237-amino-acid chain: Sugar fermentation stimulation protein homolog (237 aa).

It belongs to the SfsA family.

The sequence is that of Sugar fermentation stimulation protein homolog from Pseudomonas savastanoi pv. phaseolicola (strain 1448A / Race 6) (Pseudomonas syringae pv. phaseolicola (strain 1448A / Race 6)).